An 820-amino-acid chain; its full sequence is Phospholipase D alpha 3 (820 aa).

The C2 domain maps to 1–133; it reads MTEQLLLHGT…ITGQPIDRWL (133 aa). A Ca(2+)-binding site is contributed by D194. The PLD phosphodiesterase 1 domain maps to 334-371; sequence TMFTHHQKTIVVDSEVDGSLTKRRIVSFLGGIDLCDGR. Active-site residues include H339, K341, and D346. H339 is an a 1,2-diacyl-sn-glycero-3-phosphate binding site. Residues H377 and H411 each coordinate Ca(2+). Positions 528 and 667 each coordinate a 1,2-diacyl-sn-glycero-3-phosphate. A PLD phosphodiesterase 2 domain is found at 662–689; sequence FMIYVHSKMMIVDDEYIIIGSANINQRS. Residues H667, K669, and D674 contribute to the active site. A Ca(2+)-binding site is contributed by E730.

This sequence belongs to the phospholipase D family. C2-PLD subfamily. The cofactor is Ca(2+). Expressed in buds, flowers, siliques, stems, old leaves and roots. Expressed in the sieve elements.

Its subcellular location is the cytoplasm. The protein localises to the membrane. It carries out the reaction a 1,2-diacyl-sn-glycero-3-phosphocholine + H2O = a 1,2-diacyl-sn-glycero-3-phosphate + choline + H(+). Its function is as follows. Hydrolyzes glycerol-phospholipids at the terminal phosphodiesteric bond to generate phosphatidic acids (PA). Active with phosphatidylcholine (PC), phosphatidylethanolamine (PE), phosphatidylglycerol (PG), and phosphatidylserine (PS) as substrates. No activity toward phosphatidylinositol (PI) or PIP2. Positively mediates plant responses to hyperosmotic stresses and promotes root growth, flowering, and stress avoidance. Not involved in the abscisic acid regulation of stomatal movement and transpirational water loss. The sequence is that of Phospholipase D alpha 3 from Arabidopsis thaliana (Mouse-ear cress).